A 179-amino-acid polypeptide reads, in one-letter code: Early E3 20.1 kDa glycoprotein (179 aa).

N29, N57, N70, N75, and N123 each carry an N-linked (GlcNAc...) asparagine; by host glycan.

Belongs to the adenoviridae E3_20 family.

E3 proteins seem to be dispensable for virus growth in tissue culture cells. They are potentially important for virus growth under special conditions; E3 region may help adenoviruses to evade the immune surveillance of the host. This chain is Early E3 20.1 kDa glycoprotein, found in Homo sapiens (Human).